A 172-amino-acid chain; its full sequence is Bifunctional protein PyrR (172 aa).

Residues 36–37 (TG), arginine 77, 94–102 (DDVLMSGRT), and valine 151 contribute to the substrate site. The short motif at 90–102 (LVLVDDVLMSGRT) is the PRPP-binding element.

Belongs to the purine/pyrimidine phosphoribosyltransferase family. PyrR subfamily.

It catalyses the reaction UMP + diphosphate = 5-phospho-alpha-D-ribose 1-diphosphate + uracil. Functionally, regulates the transcription of the pyrimidine nucleotide (pyr) operon in response to exogenous pyrimidines. Also displays a weak uracil phosphoribosyltransferase activity which is not physiologically significant. The polypeptide is Bifunctional protein PyrR (Pseudomonas putida (Arthrobacter siderocapsulatus)).